The following is a 287-amino-acid chain: Orotidine 5'-phosphate decarboxylase (287 aa).

Lysine 99 serves as the catalytic Proton donor.

This sequence belongs to the OMP decarboxylase family. Type 2 subfamily.

It catalyses the reaction orotidine 5'-phosphate + H(+) = UMP + CO2. It functions in the pathway pyrimidine metabolism; UMP biosynthesis via de novo pathway; UMP from orotate: step 2/2. This chain is Orotidine 5'-phosphate decarboxylase, found in Clostridium novyi (strain NT).